Here is an 89-residue protein sequence, read N- to C-terminus: MALLDFFLSRKKTTANIAKERLQIIVAERRRGDSEPAYLPDMKRDILAVICKYIQVDPDMLSVQFEQKGDDISVLELNITLPEAEETQK.

This sequence belongs to the MinE family.

In terms of biological role, prevents the cell division inhibition by proteins MinC and MinD at internal division sites while permitting inhibition at polar sites. This ensures cell division at the proper site by restricting the formation of a division septum at the midpoint of the long axis of the cell. This is Cell division topological specificity factor from Photorhabdus laumondii subsp. laumondii (strain DSM 15139 / CIP 105565 / TT01) (Photorhabdus luminescens subsp. laumondii).